Reading from the N-terminus, the 669-residue chain is Elongation factor G-like protein (669 aa).

Residues 7–279 form the tr-type G domain; the sequence is ESLRNVAIVG…VLIKEAPDPS (273 aa). The segment at 16-23 is G1; the sequence is GPYGSGKT. Residue 16–23 participates in GTP binding; it reads GPYGSGKT. The tract at residues 59–63 is G2; it reads QMSVE. The tract at residues 80 to 83 is G3; it reads DCPG. GTP is bound by residues 80-84 and 134-137; these read DCPGS and NKMD. The tract at residues 134 to 137 is G4; that stretch reads NKMD. The interval 257–259 is G5; it reads AAE.

The protein belongs to the TRAFAC class translation factor GTPase superfamily. Classic translation factor GTPase family. EF-G/EF-2 subfamily.

In Synechocystis sp. (strain ATCC 27184 / PCC 6803 / Kazusa), this protein is Elongation factor G-like protein.